We begin with the raw amino-acid sequence, 353 residues long: Photosystem II D2 protein (353 aa).

An N-acetylthreonine modification is found at Thr2. Thr2 carries the phosphothreonine modification. The helical transmembrane segment at 41–61 (CAYFALGGWFTGTTFVTSWYT) threads the bilayer. His118 provides a ligand contact to chlorophyll a. A helical membrane pass occupies residues 125 to 141 (GFMLRQFELARSVQLRP). The pheophytin a site is built by Gln130 and Asn143. The chain crosses the membrane as a helical span at residues 153 to 166 (VFVSVFLIYPLGQS). His198 lines the chlorophyll a pocket. A helical transmembrane segment spans residues 208 to 228 (AALLCAIHGATVENTLFEDGD). A plastoquinone is bound by residues His215 and Phe262. His215 serves as a coordination point for Fe cation. Position 269 (His269) interacts with Fe cation. A helical transmembrane segment spans residues 279 to 295 (GLWMSAIGVVGLALNLR).

The protein belongs to the reaction center PufL/M/PsbA/D family. As to quaternary structure, PSII is composed of 1 copy each of membrane proteins PsbA, PsbB, PsbC, PsbD, PsbE, PsbF, PsbH, PsbI, PsbJ, PsbK, PsbL, PsbM, PsbT, PsbX, PsbY, PsbZ, Psb30/Ycf12, at least 3 peripheral proteins of the oxygen-evolving complex and a large number of cofactors. It forms dimeric complexes. It depends on The D1/D2 heterodimer binds P680, chlorophylls that are the primary electron donor of PSII, and subsequent electron acceptors. It shares a non-heme iron and each subunit binds pheophytin, quinone, additional chlorophylls, carotenoids and lipids. There is also a Cl(-1) ion associated with D1 and D2, which is required for oxygen evolution. The PSII complex binds additional chlorophylls, carotenoids and specific lipids. as a cofactor.

Its subcellular location is the plastid. It localises to the chloroplast thylakoid membrane. The catalysed reaction is 2 a plastoquinone + 4 hnu + 2 H2O = 2 a plastoquinol + O2. Functionally, photosystem II (PSII) is a light-driven water:plastoquinone oxidoreductase that uses light energy to abstract electrons from H(2)O, generating O(2) and a proton gradient subsequently used for ATP formation. It consists of a core antenna complex that captures photons, and an electron transfer chain that converts photonic excitation into a charge separation. The D1/D2 (PsbA/PsbD) reaction center heterodimer binds P680, the primary electron donor of PSII as well as several subsequent electron acceptors. D2 is needed for assembly of a stable PSII complex. The polypeptide is Photosystem II D2 protein (Liriodendron tulipifera (Tuliptree)).